We begin with the raw amino-acid sequence, 701 residues long: Lutropin-choriogonadotropic hormone receptor (701 aa).

The first 26 residues, 1-26, serve as a signal peptide directing secretion; sequence MGRPSLALRLLLALLLLPPPAPLLWA. The Extracellular segment spans residues 27-365; it reads LRPAPCPEPC…EDIMGYNFLR (339 aa). Asn-101 is a glycosylation site (N-linked (GlcNAc...) asparagine). 6 LRR repeats span residues 124–149, 151–173, 174–198, 200–222, 223–246, and 250–271; these read LPRLKYLSICNTGIHKLPDVTKIFSS, FNFILEICDNLHITTIPRNAFQG, MNNESITLKLYGNGFEEIQSHAFNG, TLISLELKENARLEKMHNDAFRG, ATGPSILDISSTKLQALPTYGLES, and LIATSSYSLKKLPSREKFTNLL. N-linked (GlcNAc...) asparagine glycosylation is found at Asn-176 and Asn-197. Residues Asn-293, Asn-301, and Asn-315 are each glycosylated (N-linked (GlcNAc...) asparagine). Residue Tyr-333 is modified to Sulfotyrosine. Residues 366–387 traverse the membrane as a helical segment; it reads VLIWLINILAITGNVTVLFVLL. Topologically, residues 388–397 are cytoplasmic; it reads TSRYKLTVPR. The chain crosses the membrane as a helical span at residues 398 to 418; the sequence is FLMCNLSFADFCMGLYLLLIA. The Extracellular segment spans residues 419-441; the sequence is SVDAQTKGQYYNHAIDWQTGSGC. A disulfide bond links Cys-441 and Cys-516. The helical transmembrane segment at 442 to 464 threads the bilayer; it reads SAAGFFTVFASELSVYTLTVITL. Topologically, residues 465–484 are cytoplasmic; sequence ERWHTITYAIQLDQKLRLKH. The chain crosses the membrane as a helical span at residues 485–507; the sequence is AIPVMLGGWLFSTLIAVLPLVGV. The Extracellular segment spans residues 508 to 527; the sequence is SNYMKVSICLPMDVESTLSQ. A helical transmembrane segment spans residues 528–551; that stretch reads VYILTILILNVMAFIIICACYIKI. Over 552–572 the chain is Cytoplasmic; that stretch reads YFAVQNPELMATNKDTKIAKK. A helical membrane pass occupies residues 573-596; the sequence is MAVLIFTDFTCMAPISFFAISAAF. Over 597-607 the chain is Extracellular; it reads KVPLITVTNSK. Residues 608-629 traverse the membrane as a helical segment; it reads VLLVLFYPVNSCANPFLYAIFT. The Cytoplasmic segment spans residues 630-701; that stretch reads KAFQRDFFLL…VLDKTCYKEC (72 aa). 2 S-palmitoyl cysteine lipidation sites follow: Cys-645 and Cys-646.

This sequence belongs to the G-protein coupled receptor 1 family. FSH/LSH/TSH subfamily. Sulfated.

It localises to the cell membrane. Functionally, receptor for lutropin-choriogonadotropic hormone. The activity of this receptor is mediated by G proteins which activate adenylate cyclase. This chain is Lutropin-choriogonadotropic hormone receptor (LHCGR), found in Bos taurus (Bovine).